The primary structure comprises 234 residues: Leucyl/phenylalanyl-tRNA--protein transferase (234 aa).

Belongs to the L/F-transferase family.

The protein localises to the cytoplasm. The enzyme catalyses N-terminal L-lysyl-[protein] + L-leucyl-tRNA(Leu) = N-terminal L-leucyl-L-lysyl-[protein] + tRNA(Leu) + H(+). The catalysed reaction is N-terminal L-arginyl-[protein] + L-leucyl-tRNA(Leu) = N-terminal L-leucyl-L-arginyl-[protein] + tRNA(Leu) + H(+). It catalyses the reaction L-phenylalanyl-tRNA(Phe) + an N-terminal L-alpha-aminoacyl-[protein] = an N-terminal L-phenylalanyl-L-alpha-aminoacyl-[protein] + tRNA(Phe). Its function is as follows. Functions in the N-end rule pathway of protein degradation where it conjugates Leu, Phe and, less efficiently, Met from aminoacyl-tRNAs to the N-termini of proteins containing an N-terminal arginine or lysine. The protein is Leucyl/phenylalanyl-tRNA--protein transferase of Dechloromonas aromatica (strain RCB).